We begin with the raw amino-acid sequence, 333 residues long: Fructose-1,6-bisphosphatase class 1 (333 aa).

The Mg(2+) site is built by glutamate 92, aspartate 113, leucine 115, and aspartate 116. Substrate-binding positions include 116–119 (DGSS), asparagine 209, tyrosine 242, and lysine 272. Glutamate 278 serves as a coordination point for Mg(2+).

It belongs to the FBPase class 1 family. In terms of assembly, homotetramer. The cofactor is Mg(2+).

It localises to the cytoplasm. It catalyses the reaction beta-D-fructose 1,6-bisphosphate + H2O = beta-D-fructose 6-phosphate + phosphate. Its pathway is carbohydrate biosynthesis; Calvin cycle. In Chlorobium luteolum (strain DSM 273 / BCRC 81028 / 2530) (Pelodictyon luteolum), this protein is Fructose-1,6-bisphosphatase class 1.